Consider the following 94-residue polypeptide: Pyrimidine/purine nucleoside phosphorylase (94 aa).

It belongs to the nucleoside phosphorylase PpnP family.

It catalyses the reaction a purine D-ribonucleoside + phosphate = a purine nucleobase + alpha-D-ribose 1-phosphate. It carries out the reaction adenosine + phosphate = alpha-D-ribose 1-phosphate + adenine. The catalysed reaction is cytidine + phosphate = cytosine + alpha-D-ribose 1-phosphate. The enzyme catalyses guanosine + phosphate = alpha-D-ribose 1-phosphate + guanine. It catalyses the reaction inosine + phosphate = alpha-D-ribose 1-phosphate + hypoxanthine. It carries out the reaction thymidine + phosphate = 2-deoxy-alpha-D-ribose 1-phosphate + thymine. The catalysed reaction is uridine + phosphate = alpha-D-ribose 1-phosphate + uracil. The enzyme catalyses xanthosine + phosphate = alpha-D-ribose 1-phosphate + xanthine. Functionally, catalyzes the phosphorolysis of diverse nucleosides, yielding D-ribose 1-phosphate and the respective free bases. Can use uridine, adenosine, guanosine, cytidine, thymidine, inosine and xanthosine as substrates. Also catalyzes the reverse reactions. The polypeptide is Pyrimidine/purine nucleoside phosphorylase (Shigella dysenteriae serotype 1 (strain Sd197)).